Here is a 232-residue protein sequence, read N- to C-terminus: Large ribosomal subunit protein uL1 (232 aa).

Belongs to the universal ribosomal protein uL1 family. As to quaternary structure, part of the 50S ribosomal subunit.

In terms of biological role, binds directly to 23S rRNA. The L1 stalk is quite mobile in the ribosome, and is involved in E site tRNA release. Protein L1 is also a translational repressor protein, it controls the translation of the L11 operon by binding to its mRNA. The polypeptide is Large ribosomal subunit protein uL1 (Coxiella burnetii (strain RSA 331 / Henzerling II)).